A 439-amino-acid chain; its full sequence is Serine hydroxymethyltransferase (439 aa).

127–129 is a (6S)-5,6,7,8-tetrahydrofolate binding site; sequence AHV. Position 233 is an N6-(pyridoxal phosphate)lysine (K233).

It belongs to the SHMT family. Homodimer. It depends on pyridoxal 5'-phosphate as a cofactor.

It is found in the cytoplasm. Its pathway is amino-acid biosynthesis; glycine biosynthesis; glycine from L-serine: step 1/1. In terms of biological role, catalyzes the reversible interconversion of serine and glycine with a modified folate serving as the one-carbon carrier. Also exhibits a pteridine-independent aldolase activity toward beta-hydroxyamino acids, producing glycine and aldehydes, via a retro-aldol mechanism. This Aeropyrum pernix (strain ATCC 700893 / DSM 11879 / JCM 9820 / NBRC 100138 / K1) protein is Serine hydroxymethyltransferase.